The primary structure comprises 900 residues: Methionine--tRNA ligase, cytoplasmic (900 aa).

Positions Gly-74–Leu-198 constitute a GST C-terminal domain. Positions Pro-273–Asn-283 match the 'HIGH' region motif. Positions Lys-593–Ser-597 match the 'KMSKS' region motif. Residue Lys-596 participates in ATP binding. Residue Ser-825 is modified to Phosphoserine. A Phosphothreonine modification is found at Thr-835. Residues Gln-841 to Lys-897 enclose the WHEP-TRS domain.

Belongs to the class-I aminoacyl-tRNA synthetase family. Monomer. Part of a multisubunit complex that groups tRNA ligases for Arg (RARS1), Asp (DARS1), Gln (QARS1), Ile (IARS1), Leu (LARS1), Lys (KARS1), Met (MARS1) the bifunctional ligase for Glu and Pro (EPRS1) and the auxiliary subunits AIMP1/p43, AIMP2/p38 and EEF1E1/p18. Forms a linear complex that contains MARS1, EEF1E1, EPRS1 and AIMP2 that is at the core of the multisubunit complex.

Its subcellular location is the cytoplasm. The protein resides in the cytosol. The protein localises to the nucleus. It localises to the nucleolus. The catalysed reaction is tRNA(Met) + L-methionine + ATP = L-methionyl-tRNA(Met) + AMP + diphosphate. Its activity is regulated as follows. Enzyme activity is increased by spermidine, EEF1A1, and when the Mg(2+) concentration is increased from 5 mM to 13 mM (in vitro), possibly by promoting the dissociation of the complex between the enzyme and its product. Its function is as follows. Catalyzes the specific attachment of an amino acid to its cognate tRNA in a 2 step reaction: the amino acid (AA) is first activated by ATP to form AA-AMP and then transferred to the acceptor end of the tRNA. Plays a role in the synthesis of ribosomal RNA in the nucleolus. The protein is Methionine--tRNA ligase, cytoplasmic of Homo sapiens (Human).